We begin with the raw amino-acid sequence, 359 residues long: Bergaptol O-methyltransferase (359 aa).

His126 serves as a coordination point for bergaptol. S-adenosyl-L-homocysteine is bound by residues Ser179, Gly203, Asp226, Asp246, and Lys260. Bergaptol is bound at residue His264. His264 serves as the catalytic Proton acceptor.

Belongs to the class I-like SAM-binding methyltransferase superfamily. Cation-independent O-methyltransferase family. COMT subfamily.

The enzyme catalyses a 5-hydroxyfurocoumarin + S-adenosyl-L-methionine = a 5-methoxyfurocoumarin + S-adenosyl-L-homocysteine + H(+). It carries out the reaction bergaptol + S-adenosyl-L-methionine = bergapten + S-adenosyl-L-homocysteine. With respect to regulation, inhibited by Cu(2+), Ni(2+) and Co(2+). This Glehnia littoralis (Beach silvertop) protein is Bergaptol O-methyltransferase.